Reading from the N-terminus, the 217-residue chain is MNWQIAIDGPSSSGKSSVAKKIAEELDFFYFSSGKMYRAFAYVMQVNRLNIDLFLKIINQINWRFEKDAVYYNNADITTVITTQSVANIASKIAVDPNIRKIAVIKQQKLAENKNIVMDGRDIGTVVLKNAQLKFFLDAKVEIRAQRRLQDMGISLSNEKKLKELIQELKQRDQIDSSRTADPLKKAQDAIYLDTSELSFDAVVKQTLKEAKKVFKL.

ATP is bound at residue 9–17 (GPSSSGKSS).

This sequence belongs to the cytidylate kinase family. Type 1 subfamily.

The protein localises to the cytoplasm. It catalyses the reaction CMP + ATP = CDP + ADP. The catalysed reaction is dCMP + ATP = dCDP + ADP. The sequence is that of Cytidylate kinase from Mycoplasma genitalium (strain ATCC 33530 / DSM 19775 / NCTC 10195 / G37) (Mycoplasmoides genitalium).